Consider the following 515-residue polypeptide: Protein nucleotidyltransferase YdiU (515 aa).

Gly101, Gly103, Arg104, Lys124, Asp136, Gly137, Arg194, and Arg201 together coordinate ATP. Asp269 serves as the catalytic Proton acceptor. Residues Asn270 and Asp279 each contribute to the Mg(2+) site. Asp279 contributes to the ATP binding site.

The protein belongs to the SELO family. Mg(2+) serves as cofactor. The cofactor is Mn(2+).

The catalysed reaction is L-seryl-[protein] + ATP = 3-O-(5'-adenylyl)-L-seryl-[protein] + diphosphate. It carries out the reaction L-threonyl-[protein] + ATP = 3-O-(5'-adenylyl)-L-threonyl-[protein] + diphosphate. The enzyme catalyses L-tyrosyl-[protein] + ATP = O-(5'-adenylyl)-L-tyrosyl-[protein] + diphosphate. It catalyses the reaction L-histidyl-[protein] + UTP = N(tele)-(5'-uridylyl)-L-histidyl-[protein] + diphosphate. The catalysed reaction is L-seryl-[protein] + UTP = O-(5'-uridylyl)-L-seryl-[protein] + diphosphate. It carries out the reaction L-tyrosyl-[protein] + UTP = O-(5'-uridylyl)-L-tyrosyl-[protein] + diphosphate. In terms of biological role, nucleotidyltransferase involved in the post-translational modification of proteins. It can catalyze the addition of adenosine monophosphate (AMP) or uridine monophosphate (UMP) to a protein, resulting in modifications known as AMPylation and UMPylation. In Cytophaga hutchinsonii (strain ATCC 33406 / DSM 1761 / CIP 103989 / NBRC 15051 / NCIMB 9469 / D465), this protein is Protein nucleotidyltransferase YdiU.